Reading from the N-terminus, the 714-residue chain is Calpain-1 catalytic subunit (714 aa).

Serine 2 carries the post-translational modification N-acetylserine. The region spanning leucine 55 to threonine 354 is the Calpain catalytic domain. Ca(2+) is bound by residues glutamine 109 and aspartate 114. Active-site residues include cysteine 115, histidine 272, and asparagine 296. Asparagine 316, aspartate 318, and aspartate 323 together coordinate Ca(2+). Phosphothreonine is present on threonine 354. Positions proline 355 to aspartate 526 are domain III. Residues glutamine 527 to glutamate 542 are linker. EF-hand domains follow at residues glutamate 541–lysine 576, phenylalanine 585–arginine 618, asparagine 615–lysine 650, and valine 680–alanine 714. Residues isoleucine 543 to phenylalanine 713 form a domain IV region. Ca(2+)-binding residues include aspartate 598, aspartate 600, asparagine 602, lysine 604, glutamate 609, aspartate 628, aspartate 630, serine 632, serine 634, and glutamate 639.

The protein belongs to the peptidase C2 family. In terms of assembly, forms a heterodimer with a small (regulatory) subunit CAPNS1. Ca(2+) is required as a cofactor. In terms of processing, undergoes calcium-induced successive autoproteolytic cleavages that generate a membrane-bound 78 kDa active form and an intracellular 75 kDa active form. Calpastatin reduces with high efficiency the transition from 78 kDa to 75 kDa calpain forms. In terms of tissue distribution, ubiquitous.

It is found in the cytoplasm. The protein resides in the cell membrane. The catalysed reaction is Broad endopeptidase specificity.. Activated by micromolar concentrations of calcium and inhibited by calpastatin. Its function is as follows. Calcium-regulated non-lysosomal thiol-protease which catalyzes limited proteolysis of substrates involved in cytoskeletal remodeling and signal transduction. Proteolytically cleaves CTBP1 at 'Asn-375', 'Gly-387' and 'His-409'. Cleaves and activates caspase-7 (CASP7). This chain is Calpain-1 catalytic subunit, found in Homo sapiens (Human).